The chain runs to 178 residues: Peptide deformylase (178 aa).

Fe cation is bound by residues cysteine 92 and histidine 134. Glutamate 135 is a catalytic residue. Histidine 138 provides a ligand contact to Fe cation.

The protein belongs to the polypeptide deformylase family. Requires Fe(2+) as cofactor.

It carries out the reaction N-terminal N-formyl-L-methionyl-[peptide] + H2O = N-terminal L-methionyl-[peptide] + formate. Removes the formyl group from the N-terminal Met of newly synthesized proteins. Requires at least a dipeptide for an efficient rate of reaction. N-terminal L-methionine is a prerequisite for activity but the enzyme has broad specificity at other positions. The chain is Peptide deformylase from Alkalilimnicola ehrlichii (strain ATCC BAA-1101 / DSM 17681 / MLHE-1).